A 27-amino-acid chain; its full sequence is Morintide mO5 (27 aa).

The 27-residue stretch at 1 to 27 (NGLCCSQYGFCGTTSQYCSRANGCQSN) folds into the Chitin-binding type-1 domain. Cys4 and Cys18 are oxidised to a cystine.

In terms of tissue distribution, seeds (at protein level).

Chitin-binding protein which functions in defense against chitin-containing fungal pathogens. This is Morintide mO5 from Moringa oleifera (Horseradish tree).